Consider the following 269-residue polypeptide: Energy-coupling factor transporter ATP-binding protein EcfA1 (269 aa).

The ABC transporter domain occupies 8–242 (IVFKNVSFQY…AEELTRIGLD (235 aa)). Residue 42–49 (GHNGSGKS) coordinates ATP.

This sequence belongs to the ABC transporter superfamily. Energy-coupling factor EcfA family. As to quaternary structure, forms a stable energy-coupling factor (ECF) transporter complex composed of 2 membrane-embedded substrate-binding proteins (S component), 2 ATP-binding proteins (A component) and 2 transmembrane proteins (T component).

Its subcellular location is the cell membrane. Functionally, ATP-binding (A) component of a common energy-coupling factor (ECF) ABC-transporter complex. Unlike classic ABC transporters this ECF transporter provides the energy necessary to transport a number of different substrates. This is Energy-coupling factor transporter ATP-binding protein EcfA1 from Staphylococcus aureus (strain USA300).